Consider the following 671-residue polypeptide: MVNVMNTLSFASLSFNSNNTPVSEQFDDIYFSTQDGLEESYYVFQDGNQLWQKWQTHDVESFVIAETGFGTGLNFLAVADKFQQFLSEFPNSKLKRLYFISFEKFPLTSEQLATIHKNYPQFATLSQKMTACWQPRQTGCQRYHFEQIYLDVWFGDMLDNLPQLGDLYTNRIDAWFLDGFSPDKNPEMWNETLYRQMFSLTKNGGSFATFTAASTVRKGLQAVGFEVKKRKGFGKKREMLWGEKPQQSETAPVNYPYFYSESQTEANDIAVVGGGVASLFVVLSLLEKGKKVTLYCKDNALAQNASGNLQGAIYPQLSDDDERNIRFYVHCFDYALQRLAQIEPLVNFEHALTGVALYAYNDKTAKKLEKIARQTNDDSLFKLCSAAELSEKIGLKVPNGGAFMPQSGWLSPIQFVQGTFAYLQTKGLRIVLNHEVKDPQFSEGKWHWQHNGKTFSHQILVLANGHTLTQFQQAQGIPLYPVRGQVSQIPTTSALQQLKCVVCYDGYLTPVSKANTHCIGASHVRDNAETHFSLEEHHENVAKLQQNLTACDWTQGIDESQNLAKQGVRAALRDRVPMVGQMPNFSVQKVQYQNLYNQLRRKQAVENAANFANLYMVNGLASRGLTTAPLLGEMLASLICDEPLPISEDIWHVLSPNRTWIRKLLKGSKVE.

Residues 1–245 (MVNVMNTLSF…KREMLWGEKP (245 aa)) are tRNA (mnm(5)s(2)U34)-methyltransferase. An FAD-dependent cmnm(5)s(2)U34 oxidoreductase region spans residues 272–671 (VGGGVASLFV…RKLLKGSKVE (400 aa)).

It in the N-terminal section; belongs to the methyltransferase superfamily. tRNA (mnm(5)s(2)U34)-methyltransferase family. The protein in the C-terminal section; belongs to the DAO family. FAD is required as a cofactor.

It localises to the cytoplasm. The enzyme catalyses 5-aminomethyl-2-thiouridine(34) in tRNA + S-adenosyl-L-methionine = 5-methylaminomethyl-2-thiouridine(34) in tRNA + S-adenosyl-L-homocysteine + H(+). In terms of biological role, catalyzes the last two steps in the biosynthesis of 5-methylaminomethyl-2-thiouridine (mnm(5)s(2)U) at the wobble position (U34) in tRNA. Catalyzes the FAD-dependent demodification of cmnm(5)s(2)U34 to nm(5)s(2)U34, followed by the transfer of a methyl group from S-adenosyl-L-methionine to nm(5)s(2)U34, to form mnm(5)s(2)U34. This Actinobacillus pleuropneumoniae serotype 5b (strain L20) protein is tRNA 5-methylaminomethyl-2-thiouridine biosynthesis bifunctional protein MnmC.